A 43-amino-acid polypeptide reads, in one-letter code: Protein PsbN (43 aa).

The helical transmembrane segment at 5–27 (TLIAISISGLLVSFTGYALYTAF) threads the bilayer.

Belongs to the PsbN family.

Its subcellular location is the plastid. The protein resides in the chloroplast thylakoid membrane. May play a role in photosystem I and II biogenesis. The chain is Protein PsbN from Phaseolus vulgaris (Kidney bean).